The following is a 446-amino-acid chain: WEB family protein At3g56270 (446 aa).

Residues 313–349 (TNVSRIEILRKLEEANEEVKQSKQALEVALNRVEIAS) adopt a coiled-coil conformation.

It belongs to the WEB family.

This chain is WEB family protein At3g56270, found in Arabidopsis thaliana (Mouse-ear cress).